A 130-amino-acid polypeptide reads, in one-letter code: MSMQDPLADMLTRIRNAQMAEKSVVSMPSSTLKVAVAKVLKDEGYIAGYQISSEIKPLLSIELKYFEGRPVIEEVKRVSRPGLRQYKSVEELPKVRGGLGVSIVSTNKGVMTDRAARAAGVGGEVLCTVF.

The protein belongs to the universal ribosomal protein uS8 family. As to quaternary structure, part of the 30S ribosomal subunit. Contacts proteins S5 and S12.

One of the primary rRNA binding proteins, it binds directly to 16S rRNA central domain where it helps coordinate assembly of the platform of the 30S subunit. The chain is Small ribosomal subunit protein uS8 from Pseudomonas fluorescens (strain ATCC BAA-477 / NRRL B-23932 / Pf-5).